A 300-amino-acid polypeptide reads, in one-letter code: Iron-dependent extradiol dioxygenase (300 aa).

VOC domains lie at 5–120 (SLAY…AFHG) and 142–270 (GLGH…FGCE). Residue histidine 145 coordinates Fe cation. Residues histidine 200, histidine 215, aspartate 250, and tyrosine 256 each coordinate substrate. Histidine 215 serves as a coordination point for Fe cation. Glutamate 266 contributes to the Fe cation binding site.

The protein belongs to the extradiol ring-cleavage dioxygenase family. As to quaternary structure, homodimer. Requires Fe(2+) as cofactor.

The catalysed reaction is 3,4-dihydroxy-9,10-secoandrosta-1,3,5(10)-triene-9,17-dione + O2 = (1E,2Z)-3-hydroxy-5,9,17-trioxo-4,5:9,10-disecoandrosta-1(10),2-dien-4-oate + H(+). Its pathway is steroid metabolism; cholesterol metabolism. Functionally, catalyzes the meta-cleavage of 3,4-dihydroxy-9,10-seconandrost-1,3,5(10)-triene-9,17-dione (3,4-DHSA) to produce 4,5-9,10-diseco-3-hydroxy-5,9,17-trioxoandrosta-1(10),2-diene-4-oic acid (4,9-DSHA). Also involved in biphenyl and polychlorinated biphenyls (PCBs) degradation. The sequence is that of Iron-dependent extradiol dioxygenase (hsaC) from Rhodococcus jostii (strain RHA1).